We begin with the raw amino-acid sequence, 608 residues long: Nuclear protein localization protein 4 homolog (608 aa).

N-acetylalanine is present on Ala2. Lys179 bears the N6-acetyllysine mark. Residues 226-363 (IMFENHTVAD…ICRLSPDGHF (138 aa)) enclose the MPN domain. The RanBP2-type zinc-finger motif lies at 580–608 (TSAMWACQHCTFMNQPGTGHCEMCSLPRT).

The protein belongs to the NPL4 family. In terms of assembly, heterodimer with UFD1. The heterodimer binds ubiquitinated proteins. The heterodimer binds to VCP and inhibits Golgi membrane fusion. Interacts with ZFAND2B; probably through VCP.

It is found in the cytoplasm. It localises to the cytosol. The protein resides in the endoplasmic reticulum. The protein localises to the nucleus. It functions in the pathway protein degradation; proteasomal ubiquitin-dependent pathway. In terms of biological role, the ternary complex containing UFD1, VCP and NPLOC4 binds ubiquitinated proteins and is necessary for the export of misfolded proteins from the ER to the cytoplasm, where they are degraded by the proteasome. The NPLOC4-UFD1-VCP complex regulates spindle disassembly at the end of mitosis and is necessary for the formation of a closed nuclear envelope. Acts as a negative regulator of type I interferon production via the complex formed with VCP and UFD1, which binds to RIGI and recruits RNF125 to promote ubiquitination and degradation of RIGI. The protein is Nuclear protein localization protein 4 homolog (Nploc4) of Mus musculus (Mouse).